Reading from the N-terminus, the 279-residue chain is Acyl-[acyl-carrier-protein]--UDP-N-acetylglucosamine O-acyltransferase (279 aa).

The tract at residues 260–279 is disordered; that stretch reads AAKEAFQEESVDKEGALVES.

The protein belongs to the transferase hexapeptide repeat family. LpxA subfamily. As to quaternary structure, homotrimer.

It is found in the cytoplasm. It catalyses the reaction a (3R)-hydroxyacyl-[ACP] + UDP-N-acetyl-alpha-D-glucosamine = a UDP-3-O-[(3R)-3-hydroxyacyl]-N-acetyl-alpha-D-glucosamine + holo-[ACP]. Its pathway is glycolipid biosynthesis; lipid IV(A) biosynthesis; lipid IV(A) from (3R)-3-hydroxytetradecanoyl-[acyl-carrier-protein] and UDP-N-acetyl-alpha-D-glucosamine: step 1/6. Its function is as follows. Involved in the biosynthesis of lipid A, a phosphorylated glycolipid that anchors the lipopolysaccharide to the outer membrane of the cell. This Chlamydia abortus (strain DSM 27085 / S26/3) (Chlamydophila abortus) protein is Acyl-[acyl-carrier-protein]--UDP-N-acetylglucosamine O-acyltransferase.